The following is a 372-amino-acid chain: Secreted beta-glucosidase SIM1 (372 aa).

The signal sequence occupies residues 1–15; sequence MKYLTLLTVLSTALA. Residues 51 to 85 are disordered; it reads VTENASSGASSGETAETIQTRSSSDVSSSSDSNPV. The segment covering 52-85 has biased composition (low complexity); it reads TENASSGASSGETAETIQTRSSSDVSSSSDSNPV. N-linked (GlcNAc...) asparagine glycosylation is found at Asn-54 and Asn-351.

It belongs to the SUN family.

It localises to the secreted. Its subcellular location is the cell wall. In terms of biological role, cell surface beta-glucosidase involved in cell wall maintenance and cytokinesis. Plays a role redundant to SUN41. This is Secreted beta-glucosidase SIM1 (SIM1) from Candida albicans (strain SC5314 / ATCC MYA-2876) (Yeast).